A 443-amino-acid chain; its full sequence is ATP-dependent protease ATPase subunit HslU (443 aa).

ATP contacts are provided by residues Ile-20, 62 to 67 (GVGKTE), Asp-255, Glu-321, and Arg-393.

It belongs to the ClpX chaperone family. HslU subfamily. A double ring-shaped homohexamer of HslV is capped on each side by a ring-shaped HslU homohexamer. The assembly of the HslU/HslV complex is dependent on binding of ATP.

The protein resides in the cytoplasm. ATPase subunit of a proteasome-like degradation complex; this subunit has chaperone activity. The binding of ATP and its subsequent hydrolysis by HslU are essential for unfolding of protein substrates subsequently hydrolyzed by HslV. HslU recognizes the N-terminal part of its protein substrates and unfolds these before they are guided to HslV for hydrolysis. In Helicobacter acinonychis (strain Sheeba), this protein is ATP-dependent protease ATPase subunit HslU.